The sequence spans 729 residues: Fatty acid oxidation complex subunit alpha (729 aa).

Residues 1–189 (MLYKGDTLYL…KIGLVDGVVA (189 aa)) form an enoyl-CoA hydratase/isomerase region. A substrate-binding site is contributed by D296. Residues 311–729 (ETPKHAAVLG…ARPVGALKTA (419 aa)) are 3-hydroxyacyl-CoA dehydrogenase. NAD(+) contacts are provided by residues M324, D343, 400–402 (VVE), K407, and S429. H450 acts as the For 3-hydroxyacyl-CoA dehydrogenase activity in catalysis. NAD(+) is bound at residue N453. 2 residues coordinate substrate: N500 and Y660.

This sequence in the N-terminal section; belongs to the enoyl-CoA hydratase/isomerase family. The protein in the C-terminal section; belongs to the 3-hydroxyacyl-CoA dehydrogenase family. Heterotetramer of two alpha chains (FadB) and two beta chains (FadA).

It catalyses the reaction a (3S)-3-hydroxyacyl-CoA + NAD(+) = a 3-oxoacyl-CoA + NADH + H(+). It carries out the reaction a (3S)-3-hydroxyacyl-CoA = a (2E)-enoyl-CoA + H2O. The catalysed reaction is a 4-saturated-(3S)-3-hydroxyacyl-CoA = a (3E)-enoyl-CoA + H2O. The enzyme catalyses (3S)-3-hydroxybutanoyl-CoA = (3R)-3-hydroxybutanoyl-CoA. It catalyses the reaction a (3Z)-enoyl-CoA = a 4-saturated (2E)-enoyl-CoA. It carries out the reaction a (3E)-enoyl-CoA = a 4-saturated (2E)-enoyl-CoA. It functions in the pathway lipid metabolism; fatty acid beta-oxidation. In terms of biological role, involved in the aerobic and anaerobic degradation of long-chain fatty acids via beta-oxidation cycle. Catalyzes the formation of 3-oxoacyl-CoA from enoyl-CoA via L-3-hydroxyacyl-CoA. It can also use D-3-hydroxyacyl-CoA and cis-3-enoyl-CoA as substrate. The sequence is that of Fatty acid oxidation complex subunit alpha from Klebsiella pneumoniae (strain 342).